Consider the following 488-residue polypeptide: 3-octaprenyl-4-hydroxybenzoate carboxy-lyase (488 aa).

Asparagine 172 contacts Mn(2+). Residues 175 to 177 (IYR), 189 to 191 (RWL), and 194 to 195 (RG) each bind prenylated FMN. A Mn(2+)-binding site is contributed by glutamate 238. Aspartate 287 acts as the Proton donor in catalysis.

The protein belongs to the UbiD family. Homohexamer. It depends on prenylated FMN as a cofactor. Mn(2+) is required as a cofactor.

It localises to the cell membrane. The catalysed reaction is a 4-hydroxy-3-(all-trans-polyprenyl)benzoate + H(+) = a 2-(all-trans-polyprenyl)phenol + CO2. Its pathway is cofactor biosynthesis; ubiquinone biosynthesis. Its function is as follows. Catalyzes the decarboxylation of 3-octaprenyl-4-hydroxy benzoate to 2-octaprenylphenol, an intermediate step in ubiquinone biosynthesis. The polypeptide is 3-octaprenyl-4-hydroxybenzoate carboxy-lyase (Pseudomonas fluorescens (strain ATCC BAA-477 / NRRL B-23932 / Pf-5)).